The following is a 613-amino-acid chain: Protein translocase subunit SecD (613 aa).

6 helical membrane-spanning segments follow: residues 10–30 (ALVV…WFYF), 452–472 (KGTL…VVYY), 477–497 (LVAD…MSMI), 503–523 (LPGI…NVLI), 548–568 (VFWT…VLFQ), and 576–596 (GFAV…IVVT).

This sequence belongs to the SecD/SecF family. SecD subfamily. Forms a complex with SecF. Part of the essential Sec protein translocation apparatus which comprises SecA, SecYEG and auxiliary proteins SecDF-YajC and YidC.

It is found in the cell inner membrane. Part of the Sec protein translocase complex. Interacts with the SecYEG preprotein conducting channel. SecDF uses the proton motive force (PMF) to complete protein translocation after the ATP-dependent function of SecA. The polypeptide is Protein translocase subunit SecD (Anaeromyxobacter dehalogenans (strain 2CP-C)).